Consider the following 79-residue polypeptide: Conotoxin 1 (79 aa).

The first 22 residues, 1–22 (MKLTCVLIITVLFLTASQLITA), serve as a signal peptide directing secretion. Positions 23–46 (DYSRDQRQYRAVRLGDEMRTFKGA) are excised as a propeptide. 3 cysteine pairs are disulfide-bonded: Cys-49–Cys-62, Cys-56–Cys-67, and Cys-61–Cys-77.

The protein belongs to the conotoxin O1 superfamily. In terms of tissue distribution, expressed by the venom duct.

It is found in the secreted. This chain is Conotoxin 1, found in Conus vexillum (Flag cone).